The following is a 611-amino-acid chain: MWTHPINYDVIVVGAGHAGCEAAFCSAKMGASVLILTSNLDTIAKLSCNPAVGGIGKGHIVREIDALGGIMAEVTDQSGIQFRILNQTKGPAVRAPRAQVDKQMYHIHMKRLLESTPGLHIMQGTVESLLDNENVIQGVTTKEGITYLGKTVILSSGTFMRGLIHIGDLNFPGGRLGDPAATGLSAALKERGFPISRLKTGTPPRLLASSIDFSVAEEQPGDPGVGFVHRDEPFVPPLPQVSCYITHTTQKTKDIIAANISRSALYGGRIEGIGPRYCPSIEDKIVKFADKERHHIFIEPEGIYTQEVYVNGLSTSMPFDVQYNMIRSVHGLENAIITRPAYAIEYDYVHGNVIYPTLESKIVEGLFLCGQINGTTGYEEAAAQGLIAGINAVNKVLKKPAFIPSRQESYIGVMLDDLTTQVLDEPYRMFTGRAEHRLLLRQDNACLRLSHYGRDLGLLSQERYEIFENQKQIIEDEKARLNKTFKKYGNSVVSLAKALCRPEVSYDILRETFPDDVRDLGSTLNASLEMEIKYAGYIDRQKSLIHSLSKSENMVIPEDIDYQSISSLSLEAREKLAKFTPRTIGSASRISGIACADIQVLMVAVKKHAHQ.

14-19 (GAGHAG) lines the FAD pocket. 274-288 (GPRYCPSIEDKIVKF) is a binding site for NAD(+).

The protein belongs to the MnmG family. In terms of assembly, homodimer. Heterotetramer of two MnmE and two MnmG subunits. FAD serves as cofactor.

The protein resides in the cytoplasm. Functionally, NAD-binding protein involved in the addition of a carboxymethylaminomethyl (cmnm) group at the wobble position (U34) of certain tRNAs, forming tRNA-cmnm(5)s(2)U34. The chain is tRNA uridine 5-carboxymethylaminomethyl modification enzyme MnmG from Chlamydia caviae (strain ATCC VR-813 / DSM 19441 / 03DC25 / GPIC) (Chlamydophila caviae).